Reading from the N-terminus, the 186-residue chain is Translation initiation factor IF-3 (186 aa).

The tract at residues 1–21 is disordered; that stretch reads MINRSSGKDRDRSRSGDKELR.

It belongs to the IF-3 family. As to quaternary structure, monomer.

The protein resides in the cytoplasm. IF-3 binds to the 30S ribosomal subunit and shifts the equilibrium between 70S ribosomes and their 50S and 30S subunits in favor of the free subunits, thus enhancing the availability of 30S subunits on which protein synthesis initiation begins. The polypeptide is Translation initiation factor IF-3 (Borrelia turicatae (strain 91E135)).